The chain runs to 510 residues: D-alanine--D-alanyl carrier protein ligase (510 aa).

Thr157 to Ser158 lines the ATP pocket. Asp202 is a binding site for D-alanine. Asn297–Thr302 contributes to the ATP binding site. Val306 lines the D-alanine pocket. Asp389 and Lys498 together coordinate ATP. Lys498 serves as a coordination point for D-alanine.

Belongs to the ATP-dependent AMP-binding enzyme family. DltA subfamily.

The protein localises to the cytoplasm. It carries out the reaction holo-[D-alanyl-carrier protein] + D-alanine + ATP = D-alanyl-[D-alanyl-carrier protein] + AMP + diphosphate. It participates in cell wall biogenesis; lipoteichoic acid biosynthesis. Its function is as follows. Catalyzes the first step in the D-alanylation of lipoteichoic acid (LTA), the activation of D-alanine and its transfer onto the D-alanyl carrier protein (Dcp) DltC. In an ATP-dependent two-step reaction, forms a high energy D-alanyl-AMP intermediate, followed by transfer of the D-alanyl residue as a thiol ester to the phosphopantheinyl prosthetic group of the Dcp. D-alanylation of LTA plays an important role in modulating the properties of the cell wall in Gram-positive bacteria, influencing the net charge of the cell wall. The polypeptide is D-alanine--D-alanyl carrier protein ligase (Listeria innocua serovar 6a (strain ATCC BAA-680 / CLIP 11262)).